Reading from the N-terminus, the 80-residue chain is Raniseptin-2 (80 aa).

The signal sequence occupies residues 1-22 (MAFLKKSLFLVLFLGIVSLSIC). A propeptide spanning residues 23 to 49 (EEEKRVGEEEEKQEEENEELSEEELRE) is cleaved from the precursor. The interval 27–46 (RVGEEEEKQEEENEELSEEE) is disordered. Residues 30-44 (EEEEKQEEENEELSE) show a composition bias toward acidic residues.

This sequence belongs to the frog skin active peptide (FSAP) family. Dermaseptin subfamily. In terms of tissue distribution, expressed by the skin glands.

The protein resides in the secreted. Functionally, has antibacterial activity. The sequence is that of Raniseptin-2 from Boana raniceps (Chaco tree frog).